The following is a 75-amino-acid chain: 8.9 kDa basic protein (75 aa).

This chain is 8.9 kDa basic protein (P8.9), found in Orgyia pseudotsugata (Douglas-fir tussock moth).